Reading from the N-terminus, the 175-residue chain is MNAKDIFNLVNYNDGKFKSEAQSKFFNDISIGGEITVNGGQIYKSRWNWIVIIDEIGIVEIYKNTNKNRTLHWSRDTNEQYKKDKASKLSRVTQEDIEFIKKDILMYDNLIAEEQAVIDKFDEIKASREIPDFMKESVNERYTLISERIETYKKQRAERQNTLRKFEERLNTVLA.

This is an uncharacterized protein from Enterobacteria phage T4 (Bacteriophage T4).